The chain runs to 118 residues: ATP-dependent Clp protease adapter protein ClpS (118 aa).

The tract at residues 1–24 (MNGSSNSGSPGGGQTGDDDGTGFD) is disordered.

It belongs to the ClpS family. Binds to the N-terminal domain of the chaperone ClpA.

Its function is as follows. Involved in the modulation of the specificity of the ClpAP-mediated ATP-dependent protein degradation. This is ATP-dependent Clp protease adapter protein ClpS from Hyphomonas neptunium (strain ATCC 15444).